Reading from the N-terminus, the 110-residue chain is Phosphoribosyl-ATP pyrophosphatase (110 aa).

The protein belongs to the PRA-PH family.

The protein localises to the cytoplasm. It catalyses the reaction 1-(5-phospho-beta-D-ribosyl)-ATP + H2O = 1-(5-phospho-beta-D-ribosyl)-5'-AMP + diphosphate + H(+). Its pathway is amino-acid biosynthesis; L-histidine biosynthesis; L-histidine from 5-phospho-alpha-D-ribose 1-diphosphate: step 2/9. The protein is Phosphoribosyl-ATP pyrophosphatase of Pseudomonas savastanoi pv. phaseolicola (strain 1448A / Race 6) (Pseudomonas syringae pv. phaseolicola (strain 1448A / Race 6)).